Consider the following 101-residue polypeptide: NAD(P)H-quinone oxidoreductase subunit 4L, chloroplastic (101 aa).

Transmembrane regions (helical) follow at residues Met-2–Ile-22, Met-32–Phe-52, and Ile-61–Val-81.

The protein belongs to the complex I subunit 4L family. In terms of assembly, NDH is composed of at least 16 different subunits, 5 of which are encoded in the nucleus.

The protein resides in the plastid. The protein localises to the chloroplast thylakoid membrane. The enzyme catalyses a plastoquinone + NADH + (n+1) H(+)(in) = a plastoquinol + NAD(+) + n H(+)(out). The catalysed reaction is a plastoquinone + NADPH + (n+1) H(+)(in) = a plastoquinol + NADP(+) + n H(+)(out). Functionally, NDH shuttles electrons from NAD(P)H:plastoquinone, via FMN and iron-sulfur (Fe-S) centers, to quinones in the photosynthetic chain and possibly in a chloroplast respiratory chain. The immediate electron acceptor for the enzyme in this species is believed to be plastoquinone. Couples the redox reaction to proton translocation, and thus conserves the redox energy in a proton gradient. The protein is NAD(P)H-quinone oxidoreductase subunit 4L, chloroplastic of Guizotia abyssinica (Niger).